Reading from the N-terminus, the 245-residue chain is TPR repeat-containing protein PA4299 (245 aa).

The first 16 residues, 1–16, serve as a signal peptide directing secretion; it reads MKALIGIGLCAALLGG. Residue Cys-17 is the site of N-palmitoyl cysteine attachment. Cys-17 carries S-diacylglycerol cysteine lipidation. TPR repeat units follow at residues 100–133, 135–167, and 169–200; these read PEAH…RPTE, RFRN…QQGG, and LPAT…DARD. Residues 210 to 245 form a disordered region; it reads SWGAVPTPGAAPASDDPLAELPAEANMHTAMANEAP.

It localises to the cell membrane. This chain is TPR repeat-containing protein PA4299, found in Pseudomonas aeruginosa (strain ATCC 15692 / DSM 22644 / CIP 104116 / JCM 14847 / LMG 12228 / 1C / PRS 101 / PAO1).